Here is a 262-residue protein sequence, read N- to C-terminus: uncharacterized protein (262 aa).

This is an uncharacterized protein from Bacillus subtilis (strain 168).